A 666-amino-acid chain; its full sequence is Nuclear distribution protein nudE homolog 1 (666 aa).

The stretch at 14-195 (EEEIAHYREK…KDQLARAIAT (182 aa)) forms a coiled coil. 4 disordered regions span residues 40–64 (EFQQ…KQQA), 220–310 (DDIN…SGIP), 369–388 (KRVT…PAPH), and 397–666 (DHNT…KVKK). Positions 251–274 (RSGTMSSIPVASPSTKRFSQQIPH) are enriched in polar residues. 2 stretches are compositionally biased toward low complexity: residues 275-287 (SPSF…STTS) and 372-383 (TSTTSTTSSTTT). The span at 400–410 (TTPTAQSQQFP) shows a compositional bias: polar residues. Composition is skewed to low complexity over residues 449 to 465 (PTFR…LPSR), 473 to 485 (ASGS…SGTA), and 536 to 554 (SATP…STSN). Polar residues-rich tracts occupy residues 587–599 (RQSL…TPTT) and 614–638 (SSLS…SGRP).

It belongs to the nudE family. Self-associates. Interacts with PAC1.

It is found in the cytoplasm. The protein localises to the cytoskeleton. Its function is as follows. Required for nuclear migration. This chain is Nuclear distribution protein nudE homolog 1 (NDE1), found in Cryptococcus neoformans var. neoformans serotype D (strain JEC21 / ATCC MYA-565) (Filobasidiella neoformans).